A 574-amino-acid chain; its full sequence is Acetolactate synthase large subunit (574 aa).

Glutamate 51 lines the thiamine diphosphate pocket. Residues arginine 153, 261-282 (HGTY…IGVR), and 304-323 (DIDP…IVGN) each bind FAD. The segment at 397-477 (QHQMFAALYY…ILILNLNNKS (81 aa)) is thiamine pyrophosphate binding. The Mg(2+) site is built by aspartate 448 and asparagine 475.

Belongs to the TPP enzyme family. In terms of assembly, dimer of large and small chains. It depends on Mg(2+) as a cofactor. Requires thiamine diphosphate as cofactor.

The enzyme catalyses 2 pyruvate + H(+) = (2S)-2-acetolactate + CO2. It participates in amino-acid biosynthesis; L-isoleucine biosynthesis; L-isoleucine from 2-oxobutanoate: step 1/4. Its pathway is amino-acid biosynthesis; L-valine biosynthesis; L-valine from pyruvate: step 1/4. This chain is Acetolactate synthase large subunit (ilvI), found in Buchnera aphidicola subsp. Schlechtendalia chinensis.